The sequence spans 366 residues: Ribosome-binding ATPase YchF (366 aa).

Residues 3–259 (LTAGIVGLPN…LEGEEKQMFL (257 aa)) form the OBG-type G domain. 12 to 17 (NVGKST) serves as a coordination point for ATP. Residues Ser-16 and Thr-36 each contribute to the Mg(2+) site. The TGS domain maps to 281–364 (GLATYFTAGE…QDGDVIHFRF (84 aa)).

This sequence belongs to the TRAFAC class OBG-HflX-like GTPase superfamily. OBG GTPase family. YchF/OLA1 subfamily. Mg(2+) is required as a cofactor.

In terms of biological role, ATPase that binds to both the 70S ribosome and the 50S ribosomal subunit in a nucleotide-independent manner. The chain is Ribosome-binding ATPase YchF from Bacillus subtilis (strain 168).